The primary structure comprises 425 residues: Probable aminotransferase tcpI (425 aa).

Lys256 carries the post-translational modification N6-(pyridoxal phosphate)lysine.

Belongs to the class-I pyridoxal-phosphate-dependent aminotransferase family. Pyridoxal 5'-phosphate serves as cofactor.

It functions in the pathway secondary metabolite biosynthesis. In terms of biological role, probable aminotransferase; part of the gene cluster that mediates the biosynthesis of an unusual class of epipolythiodioxopiperazines (ETPs) lacking the reactive thiol group important for toxicity. Firstly, L-tyrosine is prenylated by tcpD, before undergoing condensation with L-glycine in a reaction catalyzed by the NRPS tcpP leading to the diketopiperazine (DKP) backbone. Afterwards the alpha-carbon of tyrosine is oxidized by the cytochrome P450 tcpC to form a hydroxyl group. However, in contrast other ETP biosynthesis pathways studied so far, tcpC is not able to bishydroxylate the DKP at both alpha-carbon positions, but hydroxylates the alpha-carbon of the tyrosine part and the nitrogen of the glycine part. The next steps involve an alpha,beta-elimination reaction catalyzed by tcpI, a methylation by the methyltransferase tcpN the action of the four enzyme cascade tcpG/K/J/I. Due to a dysfunctional cytochrome P450 monooxygenase tcpC, the pathway leads to the biosynthesis of probable non-toxic metabolites lacking the reactive thiol group. The chain is Probable aminotransferase tcpI from Claviceps purpurea (strain 20.1) (Ergot fungus).